An 88-amino-acid polypeptide reads, in one-letter code: YcgL domain-containing protein HI_1446 (88 aa).

Residues 1-85 form the YcgL domain; the sequence is MLCAIYKSKK…QDDGLFNSLS (85 aa).

The polypeptide is YcgL domain-containing protein HI_1446 (Haemophilus influenzae (strain ATCC 51907 / DSM 11121 / KW20 / Rd)).